The chain runs to 957 residues: Glycine dehydrogenase (decarboxylating) (957 aa).

An N6-(pyridoxal phosphate)lysine modification is found at K708.

The protein belongs to the GcvP family. As to quaternary structure, the glycine cleavage system is composed of four proteins: P, T, L and H. Requires pyridoxal 5'-phosphate as cofactor.

It catalyses the reaction N(6)-[(R)-lipoyl]-L-lysyl-[glycine-cleavage complex H protein] + glycine + H(+) = N(6)-[(R)-S(8)-aminomethyldihydrolipoyl]-L-lysyl-[glycine-cleavage complex H protein] + CO2. Functionally, the glycine cleavage system catalyzes the degradation of glycine. The P protein binds the alpha-amino group of glycine through its pyridoxal phosphate cofactor; CO(2) is released and the remaining methylamine moiety is then transferred to the lipoamide cofactor of the H protein. The sequence is that of Glycine dehydrogenase (decarboxylating) from Salmonella arizonae (strain ATCC BAA-731 / CDC346-86 / RSK2980).